Here is a 141-residue protein sequence, read N- to C-terminus: HTH-type transcriptional regulator LrpA (141 aa).

Residues 2 to 63 form the HTH asnC-type domain; that stretch reads VDERDKIILD…KINPKKLGYS (62 aa). The H-T-H motif DNA-binding region spans 21–40; sequence FTEIAKILGISETAVRKRVK.

Homooctamer; tetramer of dimers.

Its function is as follows. DNA-binding protein that negatively regulates its own transcription. Interferes with RNA polymerase (RNAP) recruitment by inhibiting the association of RNAP with the TBP-TFB promoter complex. The chain is HTH-type transcriptional regulator LrpA (lrpA) from Pyrococcus abyssi (strain GE5 / Orsay).